The following is a 490-amino-acid chain: MMERSQILTERQQSELNKAIIQYLQPICSQENNEVLDKLTSMLKIESTELDGSDIVDNYLEKKWSTVLRLQKKIIDLENEIHNLTNIINTTNSETNGVVLSKDKINWIPKGASKQTYQCENVVATVRLHPNLPLVFNGCNDGNLYIWNLTNDDNTIPEKRIKAHTRSINKMCFSYRKPYYLATCSSDLTIKIWDEKFNHIRTLNGHEHTVSSVKFSPSDSNILYSVSRDKNIRVWDISQGVCLKSFVGHSEWCRDLDAVASETQGDFVLTCSNDQSARLSHINSGVGVAMFVGHTHVVESVKFLPKIQANELIDEYITKNIDQFPSIPSELLKDPIYDELGFKYCVSASRDNTIKLWLIPPPTLIPHRSPLPSKYNNSQGWLIAEFKGHSSWVKCLSVHPNGKFIISGSDDKTIKFWDLSGLIETGSVTAIKTISGHEGFINDIDFARLTDSESNTDKELTSEEYLKDVEKRMRCLFISGSADNSIKLWS.

A coiled-coil region spans residues 65–96; it reads STVLRLQKKIIDLENEIHNLTNIINTTNSETN. 8 WD repeats span residues 118-157, 163-204, 205-245, 251-290, 293-327, 328-367, 388-427, and 436-487; these read QCENVVATVRLHPNLPLVFNGCNDGNLYIWNLTNDDNTIP, AHTR…RTLN, GHEH…CLKS, EWCRDLDAVASETQGDFVLTCSNDQSARLSHINSGVGVAM, GHTHVVESVKFLPKIQANELIDEYITKNIDQFPSI, PSELLKDPIYDELGFKYCVSASRDNTIKLWLIPPPTLIPH, GHSSWVKCLSVHPNGKFIISGSDDKTIKFWDLSGLIETGS, and GHEG…NSIK.

It belongs to the WD repeat LIS1/nudF family. In terms of assembly, self-associates. Interacts with NDL1 and dynein.

The protein localises to the cytoplasm. It is found in the cytoskeleton. The protein resides in the spindle pole. Its function is as follows. Positively regulates the activity of the minus-end directed microtubule motor protein dynein. Plays a central role in positioning the mitotic spindle at the bud neck during cell division. Targets cytoplasmic dynein to microtubule plus ends, thereby promoting dynein-mediated microtubule sliding along the bud cortex and consequently the movement of the mitotic spindle to the bud neck. This is Nuclear distribution protein PAC1 from Candida tropicalis (strain ATCC MYA-3404 / T1) (Yeast).